The following is a 344-amino-acid chain: Putative esterase NocK (344 aa).

A signal peptide (tat-type signal) is located at residues 1–34; it reads MIGVTRRSGLALAVLVSSAACAGAEPVAPPPAPA. The segment at 265–295 is disordered; that stretch reads GGADERRREEARPAAAPGGTSTSRETCANPD. The segment covering 266-276 has biased composition (basic and acidic residues); that stretch reads GADERRREEAR.

Belongs to the AB hydrolase superfamily. In terms of processing, predicted to be exported by the Tat system. The position of the signal peptide cleavage has not been experimentally proven.

This chain is Putative esterase NocK, found in Nocardia uniformis subsp. tsuyamanensis.